A 627-amino-acid chain; its full sequence is Monoterpene synthase like 1, chloroplastic (627 aa).

The transit peptide at 1–50 (MDLISVLPSTSKSCVCMHKPLSSSTHKLKPFCRTIRILGMPRPRKSVLMA) directs the protein to the chloroplast. Mg(2+) contacts are provided by Asp378, Asp382, and Asp530. The DDXXD motif motif lies at 378 to 382 (DDMYD).

This sequence belongs to the terpene synthase family. Tpsd subfamily. Mg(2+) is required as a cofactor. Requires Mn(2+) as cofactor.

The protein localises to the plastid. Its subcellular location is the chloroplast. The protein operates within terpene metabolism; oleoresin biosynthesis. It functions in the pathway secondary metabolite biosynthesis; terpenoid biosynthesis. In terms of biological role, monoterpene synthase (TPS) involved in the biosynthesis of monoterpene natural products included in conifer oleoresin secretions and volatile emissions; these compounds contribute to biotic and abiotic stress defense against herbivores and pathogens. The sequence is that of Monoterpene synthase like 1, chloroplastic from Pinus contorta (Shore pine).